The sequence spans 572 residues: Vacuolar protein sorting-associated protein vps901 (572 aa).

Composition is skewed to basic and acidic residues over residues 1–31 and 39–53; these read MDYP…EKPL and DEQR…KNHD. Residues 1-108 form a disordered region; it reads MDYPSFHEDP…HENNPGQQEI (108 aa). Residues 69-80 are compositionally biased toward polar residues; sequence QYEQTDSSSDQE. The span at 82-98 shows a compositional bias: basic and acidic residues; it reads MNEKQSLDKENRNDNIP. A VPS9 domain is found at 219 to 357; it reads VEEDRVLSEK…IETLDCSSLT (139 aa). Residues 430–502 are disordered; sequence QIDTPESKEY…IVHEEQPVDD (73 aa). The segment covering 445 to 457 has biased composition (polar residues); that stretch reads PRGSSHSGSFTTD. Residues 529 to 571 form the CUE domain; the sequence is REKAEAITALRAMFPAFDSEVIEVVLNAQQGRLSSSIDSLLEM.

Its function is as follows. Required for vacuolar protein sorting; may be required for the consumption of transport vesicles containing vacuolar protein precursors. Required for vacuolar fusion. The polypeptide is Vacuolar protein sorting-associated protein vps901 (vps901) (Schizosaccharomyces pombe (strain 972 / ATCC 24843) (Fission yeast)).